Here is a 553-residue protein sequence, read N- to C-terminus: CTP synthase (553 aa).

The interval 1–266 (MKYIFVTGGV…GKAVEDLLGL (266 aa)) is amidoligase domain. S12 serves as a coordination point for CTP. A UTP-binding site is contributed by S12. Position 13–18 (13–18 (SLGKGV)) interacts with ATP. Y53 is a binding site for L-glutamine. D70 contacts ATP. D70 and E140 together coordinate Mg(2+). CTP-binding positions include 147–149 (DIE), 187–192 (KTKPTQ), and K223. UTP-binding positions include 187 to 192 (KTKPTQ) and K223. Positions 291 to 541 (TIAIAGKYTE…VAAALQSGPS (251 aa)) constitute a Glutamine amidotransferase type-1 domain. G353 contacts L-glutamine. C380 serves as the catalytic Nucleophile; for glutamine hydrolysis. L-glutamine-binding positions include 381–384 (LGMQ), E404, and R464. Catalysis depends on residues H514 and E516.

Belongs to the CTP synthase family. As to quaternary structure, homotetramer.

It catalyses the reaction UTP + L-glutamine + ATP + H2O = CTP + L-glutamate + ADP + phosphate + 2 H(+). The enzyme catalyses L-glutamine + H2O = L-glutamate + NH4(+). The catalysed reaction is UTP + NH4(+) + ATP = CTP + ADP + phosphate + 2 H(+). It participates in pyrimidine metabolism; CTP biosynthesis via de novo pathway; CTP from UDP: step 2/2. Its activity is regulated as follows. Allosterically activated by GTP, when glutamine is the substrate; GTP has no effect on the reaction when ammonia is the substrate. The allosteric effector GTP functions by stabilizing the protein conformation that binds the tetrahedral intermediate(s) formed during glutamine hydrolysis. Inhibited by the product CTP, via allosteric rather than competitive inhibition. Functionally, catalyzes the ATP-dependent amination of UTP to CTP with either L-glutamine or ammonia as the source of nitrogen. Regulates intracellular CTP levels through interactions with the four ribonucleotide triphosphates. In Deinococcus geothermalis (strain DSM 11300 / CIP 105573 / AG-3a), this protein is CTP synthase.